Reading from the N-terminus, the 208-residue chain is Thymidylate kinase (208 aa).

Residue 11 to 18 coordinates ATP; that stretch reads GTEGVGKT.

Belongs to the thymidylate kinase family.

It carries out the reaction dTMP + ATP = dTDP + ADP. In terms of biological role, phosphorylation of dTMP to form dTDP in both de novo and salvage pathways of dTTP synthesis. This chain is Thymidylate kinase, found in Psychrobacter sp. (strain PRwf-1).